We begin with the raw amino-acid sequence, 688 residues long: MAKIRVYELAKELNISSKELITLLEEEFSVEVKNHMSAIEDEDANLIKELLSGKEKSEKTKEEDDEIETTAKNPIKESMNNKKSNKRDDKNEKVNTENAEDMGIITMTSDTITVKEISDKLEKSYAEVIKELMLMGVMASVNQEINFEMAEKLAAKFDMEILKEDEDEKEDLEDILKDNEEEEYLQKRSPIITVMGHVDHGKTSLLDAIRKSKVTSTEAGGITQHIGAYTVELNGEAITFLDTPGHAAFTAMRARGAQVTDIVILVVAADDGIMPQTQEAISHCKAANVPLIVAINKIDRPGANIDKVKQELTEYGLVAEDWGGDTICVPVSAHTKEGIDDLLEMILLSSEILELKANPNRKAKGTVVEAKLDKGRGPVATLLIQNGTLRVGDSIVVGSTYGRIRAMFNDKGRNIESAGPSTPVEILGLSEVPEAGDKFYQTKEEKTARGIADKRKEKIRDEYLQSTHKVSLEDLYNQIQEGTVKELGLIVKADVQGSVEALKQSLEKLSTEEVKVRVIHGGVGAINETDVTLATASNGIILGFNVRPDNNAIIASERDGVDIKTYRIIYDAIEDIKSAMVGMLEPEFKEVVIGTAEVRQVYKISSVGTIAGAYIQTGKLARNAGARVIRDGIVIFESELASLKRFKDDAKEVAQGYECGLSIEKFNDIKEGDIIECFIMEEIKKKTL.

Composition is skewed to basic and acidic residues over residues 53–62 and 86–95; these read GKEKSEKTKE and KRDDKNEKVN. Residues 53–100 are disordered; sequence GKEKSEKTKEEDDEIETTAKNPIKESMNNKKSNKRDDKNEKVNTENAE. Positions 187–354 constitute a tr-type G domain; it reads KRSPIITVMG…MILLSSEILE (168 aa). The interval 196–203 is G1; that stretch reads GHVDHGKT. Position 196-203 (196-203) interacts with GTP; the sequence is GHVDHGKT. The segment at 221-225 is G2; sequence GITQH. Residues 242 to 245 are G3; that stretch reads DTPG. GTP-binding positions include 242–246 and 296–299; these read DTPGH and NKID. The G4 stretch occupies residues 296 to 299; it reads NKID. The segment at 332-334 is G5; it reads SAH.

The protein belongs to the TRAFAC class translation factor GTPase superfamily. Classic translation factor GTPase family. IF-2 subfamily.

The protein resides in the cytoplasm. One of the essential components for the initiation of protein synthesis. Protects formylmethionyl-tRNA from spontaneous hydrolysis and promotes its binding to the 30S ribosomal subunits. Also involved in the hydrolysis of GTP during the formation of the 70S ribosomal complex. The sequence is that of Translation initiation factor IF-2 from Clostridium botulinum (strain Loch Maree / Type A3).